The following is a 561-amino-acid chain: MACPF domain-containing protein CAD1 (561 aa).

Positions 11–314 constitute an MACPF domain; that stretch reads VPSSEALTTT…PPIEDLQYFL (304 aa). Residues 489–514 are disordered; that stretch reads VASSGRLEPGGPSTSSSTEEVSGQSG. Residues 500-513 are compositionally biased toward polar residues; that stretch reads PSTSSSTEEVSGQS.

It belongs to the complement C6/C7/C8/C9 (TC 1.C.39) family. In terms of tissue distribution, mainly expressed in the vascular system.

In terms of biological role, negatively controls the salicylic acid (SA)-mediated pathway of programmed cell death in plant immunity. The sequence is that of MACPF domain-containing protein CAD1 (CAD1) from Arabidopsis thaliana (Mouse-ear cress).